The following is an 802-amino-acid chain: Copper-exporting P-type ATPase (802 aa).

2 consecutive HMA domains span residues 5 to 70 (KKTT…YGVA) and 72 to 138 (ETVE…YDAS). Cu(+) is bound by residues cysteine 16, cysteine 19, cysteine 83, and cysteine 86. 6 helical membrane passes run 161–181 (LIISAVLSLPLLMLMFVHLFN), 192–212 (WFQFILATPVQFIIGWQFYVG), 224–244 (MDVLVAVGTSAAYFYSIYEMV), 256–276 (LYFETSAVLITLILFGKYLEA), 411–431 (YFVPIVVGIALLTFIVWITLV), and 438–458 (PALVASISVLVIACPCALGLA). Residue aspartate 495 is the 4-aspartylphosphate intermediate of the active site. Positions 690 and 694 each coordinate Mg(2+). A run of 2 helical transmembrane segments spans residues 748 to 767 (LFWAFGYNIAGIPIAALGLL) and 771 to 790 (VAGAAMALSSVSVVTNALRL).

The protein belongs to the cation transport ATPase (P-type) (TC 3.A.3) family. Type IB subfamily.

The protein localises to the cell membrane. It carries out the reaction Cu(+)(in) + ATP + H2O = Cu(+)(out) + ADP + phosphate + H(+). Functionally, involved in copper export. This Staphylococcus aureus (strain COL) protein is Copper-exporting P-type ATPase (copA).